The primary structure comprises 57 residues: Large ribosomal subunit protein bL32 (57 aa).

This sequence belongs to the bacterial ribosomal protein bL32 family.

This chain is Large ribosomal subunit protein bL32, found in Lysinibacillus sphaericus (strain C3-41).